We begin with the raw amino-acid sequence, 169 residues long: MEIVQNFSSAALTTGILLGCLGVIFLPSIVYAAFLLGAVFFCLAGIYVLLHADFVAAAQVLVYVGAINVLILFAIMLVNPQDAPPRALDSPPLIPGIACIGLLGVLVQMISTTSWLTPPWTPEPNSLPVLGGHLFSDCLLAFEVMSLVLLVALVGAIVLARREPVERSS.

Helical transmembrane passes span 7 to 27, 29 to 49, 58 to 78, 90 to 110, and 139 to 159; these read FSSA…IFLP, IVYA…IYVL, AQVL…IMLV, SPPL…VQMI, and LLAF…AIVL.

It belongs to the complex I subunit 6 family. NDH is composed of at least 16 different subunits, 5 of which are encoded in the nucleus.

The protein resides in the plastid. It localises to the chloroplast thylakoid membrane. The enzyme catalyses a plastoquinone + NADH + (n+1) H(+)(in) = a plastoquinol + NAD(+) + n H(+)(out). It catalyses the reaction a plastoquinone + NADPH + (n+1) H(+)(in) = a plastoquinol + NADP(+) + n H(+)(out). Its function is as follows. NDH shuttles electrons from NAD(P)H:plastoquinone, via FMN and iron-sulfur (Fe-S) centers, to quinones in the photosynthetic chain and possibly in a chloroplast respiratory chain. The immediate electron acceptor for the enzyme in this species is believed to be plastoquinone. Couples the redox reaction to proton translocation, and thus conserves the redox energy in a proton gradient. In Nephroselmis olivacea (Green alga), this protein is NAD(P)H-quinone oxidoreductase subunit 6, chloroplastic (ndhG).